Consider the following 298-residue polypeptide: Glycine--tRNA ligase alpha subunit (298 aa).

Belongs to the class-II aminoacyl-tRNA synthetase family. As to quaternary structure, tetramer of two alpha and two beta subunits.

It is found in the cytoplasm. It catalyses the reaction tRNA(Gly) + glycine + ATP = glycyl-tRNA(Gly) + AMP + diphosphate. This is Glycine--tRNA ligase alpha subunit from Helicobacter pylori (strain Shi470).